A 248-amino-acid chain; its full sequence is DNA repair protein RecO (248 aa).

Belongs to the RecO family.

Involved in DNA repair and RecF pathway recombination. The chain is DNA repair protein RecO from Bacillus cytotoxicus (strain DSM 22905 / CIP 110041 / 391-98 / NVH 391-98).